Reading from the N-terminus, the 304-residue chain is D-alanine--D-alanine ligase (304 aa).

In terms of domain architecture, ATP-grasp spans 107-300 (KRLWQGSGLP…FDELVARILG (194 aa)). 134-186 (VGYPVIVKPAREGSSLGMSRVEGPEELAEAYRVAAAYDDTVLAEAWVEGEEYT) is a binding site for ATP. Residues D254, E267, and N269 each coordinate Mg(2+).

This sequence belongs to the D-alanine--D-alanine ligase family. Mg(2+) serves as cofactor. It depends on Mn(2+) as a cofactor.

The protein resides in the cytoplasm. It catalyses the reaction 2 D-alanine + ATP = D-alanyl-D-alanine + ADP + phosphate + H(+). It functions in the pathway cell wall biogenesis; peptidoglycan biosynthesis. Its function is as follows. Cell wall formation. The sequence is that of D-alanine--D-alanine ligase from Halorhodospira halophila (strain DSM 244 / SL1) (Ectothiorhodospira halophila (strain DSM 244 / SL1)).